The chain runs to 277 residues: Diaminopimelate epimerase (277 aa).

Substrate is bound by residues Asn11 and Asn72. Residue Cys81 is the Proton donor of the active site. Substrate contacts are provided by residues 82–83 (GN), Asn189, and 207–208 (ER). Cys217 acts as the Proton acceptor in catalysis. Residue 218 to 219 (GT) participates in substrate binding.

This sequence belongs to the diaminopimelate epimerase family. In terms of assembly, homodimer.

Its subcellular location is the cytoplasm. The catalysed reaction is (2S,6S)-2,6-diaminopimelate = meso-2,6-diaminopimelate. It participates in amino-acid biosynthesis; L-lysine biosynthesis via DAP pathway; DL-2,6-diaminopimelate from LL-2,6-diaminopimelate: step 1/1. Catalyzes the stereoinversion of LL-2,6-diaminopimelate (L,L-DAP) to meso-diaminopimelate (meso-DAP), a precursor of L-lysine and an essential component of the bacterial peptidoglycan. This is Diaminopimelate epimerase from Hydrogenobaculum sp. (strain Y04AAS1).